We begin with the raw amino-acid sequence, 248 residues long: DNA repair protein RecO (248 aa).

The protein belongs to the RecO family.

Its function is as follows. Involved in DNA repair and RecF pathway recombination. This is DNA repair protein RecO from Chelativorans sp. (strain BNC1).